The sequence spans 310 residues: Aspartate carbamoyltransferase catalytic subunit (310 aa).

Carbamoyl phosphate-binding residues include Arg-58 and Thr-59. Lys-86 lines the L-aspartate pocket. Carbamoyl phosphate is bound by residues Arg-108, His-136, and Gln-139. Residues Arg-169 and Arg-224 each contribute to the L-aspartate site. 2 residues coordinate carbamoyl phosphate: Gly-265 and Pro-266.

It belongs to the aspartate/ornithine carbamoyltransferase superfamily. ATCase family. As to quaternary structure, heterododecamer (2C3:3R2) of six catalytic PyrB chains organized as two trimers (C3), and six regulatory PyrI chains organized as three dimers (R2).

It catalyses the reaction carbamoyl phosphate + L-aspartate = N-carbamoyl-L-aspartate + phosphate + H(+). The protein operates within pyrimidine metabolism; UMP biosynthesis via de novo pathway; (S)-dihydroorotate from bicarbonate: step 2/3. Functionally, catalyzes the condensation of carbamoyl phosphate and aspartate to form carbamoyl aspartate and inorganic phosphate, the committed step in the de novo pyrimidine nucleotide biosynthesis pathway. The protein is Aspartate carbamoyltransferase catalytic subunit of Trichlorobacter lovleyi (strain ATCC BAA-1151 / DSM 17278 / SZ) (Geobacter lovleyi).